Reading from the N-terminus, the 309-residue chain is Aspartate carbamoyltransferase catalytic subunit (309 aa).

Positions 56 and 57 each coordinate carbamoyl phosphate. An L-aspartate-binding site is contributed by Lys-84. Carbamoyl phosphate contacts are provided by Arg-106, His-136, and Gln-139. L-aspartate contacts are provided by Arg-169 and Arg-221. The carbamoyl phosphate site is built by Ala-264 and Pro-265.

It belongs to the aspartate/ornithine carbamoyltransferase superfamily. ATCase family. In terms of assembly, heterododecamer (2C3:3R2) of six catalytic PyrB chains organized as two trimers (C3), and six regulatory PyrI chains organized as three dimers (R2).

It carries out the reaction carbamoyl phosphate + L-aspartate = N-carbamoyl-L-aspartate + phosphate + H(+). The protein operates within pyrimidine metabolism; UMP biosynthesis via de novo pathway; (S)-dihydroorotate from bicarbonate: step 2/3. In terms of biological role, catalyzes the condensation of carbamoyl phosphate and aspartate to form carbamoyl aspartate and inorganic phosphate, the committed step in the de novo pyrimidine nucleotide biosynthesis pathway. The sequence is that of Aspartate carbamoyltransferase catalytic subunit from Limosilactobacillus reuteri subsp. reuteri (strain JCM 1112) (Lactobacillus reuteri).